A 444-amino-acid polypeptide reads, in one-letter code: N-succinylarginine dihydrolase (444 aa).

Substrate is bound by residues Ser-19–Ser-28, Asn-110, and His-137–Arg-138. Glu-174 is an active-site residue. Residue Arg-214 participates in substrate binding. His-250 is an active-site residue. Asp-252 and Asn-362 together coordinate substrate. Residue Cys-368 is the Nucleophile of the active site.

Belongs to the succinylarginine dihydrolase family. Homodimer.

The enzyme catalyses N(2)-succinyl-L-arginine + 2 H2O + 2 H(+) = N(2)-succinyl-L-ornithine + 2 NH4(+) + CO2. The protein operates within amino-acid degradation; L-arginine degradation via AST pathway; L-glutamate and succinate from L-arginine: step 2/5. Its function is as follows. Catalyzes the hydrolysis of N(2)-succinylarginine into N(2)-succinylornithine, ammonia and CO(2). The sequence is that of N-succinylarginine dihydrolase from Aliivibrio fischeri (strain MJ11) (Vibrio fischeri).